The primary structure comprises 887 residues: Alanine--tRNA ligase (887 aa).

Positions 564, 568, 676, and 680 each coordinate Zn(2+).

This sequence belongs to the class-II aminoacyl-tRNA synthetase family. Requires Zn(2+) as cofactor.

Its subcellular location is the cytoplasm. The catalysed reaction is tRNA(Ala) + L-alanine + ATP = L-alanyl-tRNA(Ala) + AMP + diphosphate. Catalyzes the attachment of alanine to tRNA(Ala) in a two-step reaction: alanine is first activated by ATP to form Ala-AMP and then transferred to the acceptor end of tRNA(Ala). Also edits incorrectly charged Ser-tRNA(Ala) and Gly-tRNA(Ala) via its editing domain. The polypeptide is Alanine--tRNA ligase (Rhizobium meliloti (strain 1021) (Ensifer meliloti)).